The sequence spans 91 residues: Small ribosomal subunit protein uS19 (91 aa).

Belongs to the universal ribosomal protein uS19 family.

Functionally, protein S19 forms a complex with S13 that binds strongly to the 16S ribosomal RNA. The protein is Small ribosomal subunit protein uS19 of Saccharophagus degradans (strain 2-40 / ATCC 43961 / DSM 17024).